The primary structure comprises 987 residues: MPSSSDAINRISYISLVTSDNDKFNQTFQFYSQLGFRLTKSFSKVSSYGSGLGANHPEFQLGVSHDSLKEVWLESYPLQNVDSNGNLRPWQEMEVYDGDNCERLNESTVIKVRLLGETPLKSISQKQFVFFTTQLNKIEKILTDANVKYGKVVDNVILAEDPLNNIISFSNTQNELCKTRFQSPEEYVEKTTAEILAKRKKSQLGSKFGSFEEISPSEVGGGNGLRKKKIGVMTSGGDAPGMNPAVRAVVRAGIYYGCDVYAVYEGYEGLVKGGDLLKKMEWSDVRSYMSLGGTSIGTARCKEFRERAGRLQGAYNMIKNGIDALVVCGGDGSLTGADLFRSEWPSLVKELVDTGKLTKEEVSPYEHLTIVGLVGSIDNDMSGTDVTIGAFSALERITEMVDYIGATAASHSRAFVVEVMGRHCGWLALLSGLATGADFVFIPERPPKAGLWKEQLKEVCLRHREYGRRKTTVIVAEGAIDDELNPITSEEVKQVLADLGLDTRNTILGHVQRGGTAVAFDRRLATLQGVEAVKAVLEMTPDTPSPMIGILKHKIVRIPLVDAVKQTKAVAEAISNKDFDKAMSLRDNSFYDDYRYFRDISIYDDGSKQLSEDKRLNIAIVHVGAASAGLNAATRAVALYSLSRGHKLYAVQDGFAGLVKGDLKNLTWMDVEGWHSLGGSEIGTNRSLPSQNIGKVAYNLQKFNIQGLLIVGGFEAFTSLHELSEQKANYPIFEIPMVVVPATVSNNVPGTEYSLGADTCLNQLVSYCDAVQQSASSTRRRVFVVEVQGGHSGYVASYCGLITGALATYTPESNINLRELQGDIDLLQKVFATDRGEDHNGTLIVRNEQASAVYSTQLIADILKENANKRFETRTAIPGHVQQGFTPSANDRVMAVKFSLKAMEFIETRNGCYGKHDRKFSDEEISEHSQVVIGIHGDVVKFTCIKHLYDNEANVALRKGKTVHWTDMIDVANILNGKSLLKKQERY.

The N-terminal catalytic PFK domain 1 stretch occupies residues 1–602; the sequence is MPSSSDAINR…DYRYFRDISI (602 aa). ATP contacts are provided by residues glycine 237, 300–301, and 330–333; these read RC and GDGS. Aspartate 331 lines the Mg(2+) pocket. Beta-D-fructose 6-phosphate is bound by residues 376–378, arginine 413, 420–422, glutamate 477, arginine 504, and 510–513; these read SID, MGR, and HVQR. Aspartate 378 functions as the Proton acceptor in the catalytic mechanism. The segment at 603-616 is interdomain linker; the sequence is YDDGSKQLSEDKRL. The tract at residues 617-987 is C-terminal regulatory PFK domain 2; that stretch reads NIAIVHVGAA…KSLLKKQERY (371 aa). Beta-D-fructose 2,6-bisphosphate is bound by residues arginine 686, 743-747, arginine 781, 788-790, glutamate 848, arginine 874, 880-883, and arginine 958; these read TVSNN, QGG, and HVQQ.

Belongs to the phosphofructokinase type A (PFKA) family. ATP-dependent PFK group I subfamily. Eukaryotic two domain clade 'E' sub-subfamily. In terms of assembly, heterooctamer of 4 alpha and 4 beta chains. The cofactor is Mg(2+).

The protein resides in the cytoplasm. The enzyme catalyses beta-D-fructose 6-phosphate + ATP = beta-D-fructose 1,6-bisphosphate + ADP + H(+). Its pathway is carbohydrate degradation; glycolysis; D-glyceraldehyde 3-phosphate and glycerone phosphate from D-glucose: step 3/4. With respect to regulation, allosterically activated by ADP, AMP, or fructose 2,6-bisphosphate, and allosterically inhibited by ATP or citrate. Functionally, catalyzes the phosphorylation of D-fructose 6-phosphate to fructose 1,6-bisphosphate by ATP, the first committing step of glycolysis. This chain is ATP-dependent 6-phosphofructokinase subunit alpha (PFK1), found in Candida albicans (Yeast).